A 403-amino-acid chain; its full sequence is Acetate kinase (403 aa).

A Mg(2+)-binding site is contributed by asparagine 9. Lysine 16 is a binding site for ATP. A substrate-binding site is contributed by arginine 93. The active-site Proton donor/acceptor is the aspartate 150. Residues 210-214 (HLGNG), 284-286 (DFR), and 332-336 (GVGEN) each bind ATP. Glutamate 388 lines the Mg(2+) pocket.

It belongs to the acetokinase family. Homodimer. Mg(2+) serves as cofactor. The cofactor is Mn(2+).

The protein localises to the cytoplasm. The enzyme catalyses acetate + ATP = acetyl phosphate + ADP. Its pathway is metabolic intermediate biosynthesis; acetyl-CoA biosynthesis; acetyl-CoA from acetate: step 1/2. Its function is as follows. Catalyzes the formation of acetyl phosphate from acetate and ATP. Can also catalyze the reverse reaction. The sequence is that of Acetate kinase from Corynebacterium jeikeium (strain K411).